The primary structure comprises 228 residues: Eukaryotic translation initiation factor 4E-1 (228 aa).

EIF4G-binding stretches follow at residues 53–56 (HLLE) and 63–99 (FDTPAAKSKQDDWGSSMRPIYTFSTVEEFWSIYNNIH). Residues 71 to 76 (KQDDWG), Lys-103, and 121 to 122 (WE) each bind mRNA. Cys-126 and Cys-164 are oxidised to a cystine. The interval 147–156 (YTLLAMIGEQ) is EIF4G-binding. Residues 171-176 (RGRAEK) and 216-220 (RKLDR) each bind mRNA.

It belongs to the eukaryotic initiation factor 4E family. As to quaternary structure, EIF4F is a multi-subunit complex, the composition of which varies with external and internal environmental conditions. It is composed of at least EIF4A, EIF4E and EIF4G. EIF4E is also known to interact with other partners. In higher plants two isoforms of EIF4F have been identified, named isoform EIF4F and isoform EIF(iso)4F. Isoform EIF4F has subunits p220 and p26, whereas isoform EIF(iso)4F has subunits p82 and p28. (Microbial infection) Interacts with potyvirus viral genome-linked protein (VPg); this interaction is possible in susceptible hosts but impaired in resistant plants. In terms of processing, according to the redox status, the Cys-126-Cys-164 disulfide bridge may have a role in regulating protein function by affecting its ability to bind capped mRNA.

Its subcellular location is the nucleus. The protein localises to the cytoplasm. Functionally, component of the protein complex eIF4F, which is involved in the recognition of the mRNA cap, ATP-dependent unwinding of 5'-terminal secondary structure and recruitment of mRNA to the ribosome. Recognizes and binds the 7-methylguanosine-containing mRNA cap during an early step in the initiation of protein synthesis and facilitates ribosome binding by inducing the unwinding of the mRNAs secondary structures. Key component of recessive resistance to potyviruses. In terms of biological role, (Microbial infection) Susceptibility host factor required for viral infection by recruiting viral RNAs to the host ribosomal complex via an interaction with viral genome-linked protein (VPg). Also seems to be involved in virus movement from cell-to-cell. The polypeptide is Eukaryotic translation initiation factor 4E-1 (Pisum sativum (Garden pea)).